The chain runs to 74 residues: Cytochrome c oxidase subunit 2 (74 aa).

Residues 1 to 14 lie on the Mitochondrial intermembrane side of the membrane; it reads MAHPMQLGFQDAAS. A helical membrane pass occupies residues 15 to 45; the sequence is PVMEELLHFHDHALMIVFLISTAVLYIIVVT. Residues 46–74 lie on the Mitochondrial matrix side of the membrane; that stretch reads VTTKLTDKYVLDAQEIEMVWTIMPAVVLI.

The protein belongs to the cytochrome c oxidase subunit 2 family. Component of the cytochrome c oxidase (complex IV, CIV), a multisubunit enzyme composed of 14 subunits. The complex is composed of a catalytic core of 3 subunits MT-CO1, MT-CO2 and MT-CO3, encoded in the mitochondrial DNA, and 11 supernumerary subunits COX4I, COX5A, COX5B, COX6A, COX6B, COX6C, COX7A, COX7B, COX7C, COX8 and NDUFA4, which are encoded in the nuclear genome. The complex exists as a monomer or a dimer and forms supercomplexes (SCs) in the inner mitochondrial membrane with NADH-ubiquinone oxidoreductase (complex I, CI) and ubiquinol-cytochrome c oxidoreductase (cytochrome b-c1 complex, complex III, CIII), resulting in different assemblies (supercomplex SCI(1)III(2)IV(1) and megacomplex MCI(2)III(2)IV(2)). Found in a complex with TMEM177, COA6, COX18, COX20, SCO1 and SCO2. Interacts with TMEM177 in a COX20-dependent manner. Interacts with COX20. Interacts with COX16. It depends on Cu cation as a cofactor.

It localises to the mitochondrion inner membrane. The catalysed reaction is 4 Fe(II)-[cytochrome c] + O2 + 8 H(+)(in) = 4 Fe(III)-[cytochrome c] + 2 H2O + 4 H(+)(out). In terms of biological role, component of the cytochrome c oxidase, the last enzyme in the mitochondrial electron transport chain which drives oxidative phosphorylation. The respiratory chain contains 3 multisubunit complexes succinate dehydrogenase (complex II, CII), ubiquinol-cytochrome c oxidoreductase (cytochrome b-c1 complex, complex III, CIII) and cytochrome c oxidase (complex IV, CIV), that cooperate to transfer electrons derived from NADH and succinate to molecular oxygen, creating an electrochemical gradient over the inner membrane that drives transmembrane transport and the ATP synthase. Cytochrome c oxidase is the component of the respiratory chain that catalyzes the reduction of oxygen to water. Electrons originating from reduced cytochrome c in the intermembrane space (IMS) are transferred via the dinuclear copper A center (CU(A)) of subunit 2 and heme A of subunit 1 to the active site in subunit 1, a binuclear center (BNC) formed by heme A3 and copper B (CU(B)). The BNC reduces molecular oxygen to 2 water molecules using 4 electrons from cytochrome c in the IMS and 4 protons from the mitochondrial matrix. The chain is Cytochrome c oxidase subunit 2 (mt-co2) from Amia calva (Bowfin).